A 438-amino-acid chain; its full sequence is Elongation factor 1-alpha (438 aa).

Residues 6 to 229 (KPHLNIVIIG…ALDTLEVPPK (224 aa)) form the tr-type G domain. The G1 stretch occupies residues 15–22 (GHVDHGKS). 15–22 (GHVDHGKS) is a GTP binding site. A Mg(2+)-binding site is contributed by S22. Residues 71-75 (GVTIS) form a G2 region. A G3 region spans residues 92 to 95 (DAPG). Residues 92-96 (DAPGH) and 154-157 (NKMD) each bind GTP. A G4 region spans residues 154–157 (NKMD). Positions 195–197 (SAW) are G5.

Belongs to the TRAFAC class translation factor GTPase superfamily. Classic translation factor GTPase family. EF-Tu/EF-1A subfamily.

It is found in the cytoplasm. It catalyses the reaction GTP + H2O = GDP + phosphate + H(+). Its function is as follows. GTP hydrolase that promotes the GTP-dependent binding of aminoacyl-tRNA to the A-site of ribosomes during protein biosynthesis. The protein is Elongation factor 1-alpha of Desulfurococcus mucosus (Desulfurococcus mobilis).